Here is a 458-residue protein sequence, read N- to C-terminus: Argininosuccinate lyase (458 aa).

The protein belongs to the lyase 1 family. Argininosuccinate lyase subfamily.

The protein localises to the cytoplasm. It carries out the reaction 2-(N(omega)-L-arginino)succinate = fumarate + L-arginine. It participates in amino-acid biosynthesis; L-arginine biosynthesis; L-arginine from L-ornithine and carbamoyl phosphate: step 3/3. The sequence is that of Argininosuccinate lyase from Salmonella dublin (strain CT_02021853).